A 147-amino-acid polypeptide reads, in one-letter code: Hemoglobin subunit gamma (147 aa).

The Globin domain maps to 3–147 (YFTAEEKAAI…VASALARKYH (145 aa)). Positions 64 and 93 each coordinate heme b.

The protein belongs to the globin family. Heterotetramer of two alpha chains and two gamma chains in fetal hemoglobin (Hb F). In terms of tissue distribution, red blood cells.

Functionally, gamma chains make up the fetal hemoglobin F, in combination with alpha chains. The chain is Hemoglobin subunit gamma (HBG) from Dugong dugon (Dugong).